The chain runs to 431 residues: Histidinol dehydrogenase (431 aa).

Y124, Q187, and N210 together coordinate NAD(+). Substrate-binding residues include S236, Q258, and H261. Positions 258 and 261 each coordinate Zn(2+). Active-site proton acceptor residues include E325 and H326. Substrate is bound by residues H326, D359, E413, and H418. Residue D359 coordinates Zn(2+). Residue H418 coordinates Zn(2+).

It belongs to the histidinol dehydrogenase family. Zn(2+) serves as cofactor.

The catalysed reaction is L-histidinol + 2 NAD(+) + H2O = L-histidine + 2 NADH + 3 H(+). It functions in the pathway amino-acid biosynthesis; L-histidine biosynthesis; L-histidine from 5-phospho-alpha-D-ribose 1-diphosphate: step 9/9. In terms of biological role, catalyzes the sequential NAD-dependent oxidations of L-histidinol to L-histidinaldehyde and then to L-histidine. The chain is Histidinol dehydrogenase from Legionella pneumophila (strain Lens).